The primary structure comprises 117 residues: MSTEEQAEWFEFNQETVEALIEDGSDSTKPHTIEYHFAGDDFDVLEKAAVDAFKAGFEVGDAEELMLDDGGTIFCFDAVVERLLDVDLINADTVKLLAIAQKQNVQFDGWGTYFIES.

This sequence belongs to the RraB family. In terms of assembly, interacts with the C-terminal region of Rne.

Its subcellular location is the cytoplasm. Functionally, globally modulates RNA abundance by binding to RNase E (Rne) and regulating its endonucleolytic activity. Can modulate Rne action in a substrate-dependent manner by altering the composition of the degradosome. The chain is Regulator of ribonuclease activity B from Pseudoalteromonas atlantica (strain T6c / ATCC BAA-1087).